The primary structure comprises 174 residues: NAD(P)H-quinone oxidoreductase subunit J, chloroplastic (174 aa).

This sequence belongs to the complex I 30 kDa subunit family. As to quaternary structure, NDH is composed of at least 16 different subunits, 5 of which are encoded in the nucleus.

The protein localises to the plastid. It is found in the chloroplast thylakoid membrane. It carries out the reaction a plastoquinone + NADH + (n+1) H(+)(in) = a plastoquinol + NAD(+) + n H(+)(out). It catalyses the reaction a plastoquinone + NADPH + (n+1) H(+)(in) = a plastoquinol + NADP(+) + n H(+)(out). Its function is as follows. NDH shuttles electrons from NAD(P)H:plastoquinone, via FMN and iron-sulfur (Fe-S) centers, to quinones in the photosynthetic chain and possibly in a chloroplast respiratory chain. The immediate electron acceptor for the enzyme in this species is believed to be plastoquinone. Couples the redox reaction to proton translocation, and thus conserves the redox energy in a proton gradient. The polypeptide is NAD(P)H-quinone oxidoreductase subunit J, chloroplastic (Mesostigma viride (Green alga)).